The primary structure comprises 348 residues: NADH-ubiquinone oxidoreductase chain 2 (348 aa).

Transmembrane regions (helical) follow at residues 1-21 (MNPY…TLTF), 25-45 (HWIL…PLMA), 60-80 (FLIQ…NAWI), 99-119 (MFAL…PEVL), 124-144 (LLTG…LIIQ), 151-171 (PLIL…SGLN), 178-197 (ILAY…IQYA), 202-224 (LIAL…VLSA), 239-259 (ILAA…PLTG), 274-294 (DLPA…FFYL), and 326-346 (LTIS…ILML).

This sequence belongs to the complex I subunit 2 family. In terms of assembly, core subunit of respiratory chain NADH dehydrogenase (Complex I) which is composed of 45 different subunits.

The protein resides in the mitochondrion inner membrane. The enzyme catalyses a ubiquinone + NADH + 5 H(+)(in) = a ubiquinol + NAD(+) + 4 H(+)(out). Its function is as follows. Core subunit of the mitochondrial membrane respiratory chain NADH dehydrogenase (Complex I) which catalyzes electron transfer from NADH through the respiratory chain, using ubiquinone as an electron acceptor. Essential for the catalytic activity and assembly of complex I. The protein is NADH-ubiquinone oxidoreductase chain 2 (mt-nd2) of Danio rerio (Zebrafish).